Reading from the N-terminus, the 979-residue chain is Glutamate receptor ionotropic, kainate 5 (979 aa).

An N-terminal signal peptide occupies residues 1–14 (MPAELLLLLIVAFA). Over 15 to 544 (NPSCQVLSSL…YFSFLDPFSP (530 aa)) the chain is Extracellular. Disulfide bonds link Cys36-Cys292, Cys83-Cys334, and Cys165-Cys170. 10 N-linked (GlcNAc...) asparagine glycosylation sites follow: Asn219, Asn271, Asn285, Asn322, Asn372, Asn394, Asn400, Asn407, Asn414, and Asn478. The chain crosses the membrane as a helical span at residues 545-565 (AVWLFMLLAYLAVSCVLFLAA). Residues 566 to 622 (RLSPYEWYNPHPCLRARPHILENQYTLGNSLWFPVGGFMQQGSEIMPRALSTRCVSG) are Cytoplasmic-facing. A helical transmembrane segment spans residues 623 to 643 (VWWAFTLIIISSYTANLAAFL). The Extracellular portion of the chain corresponds to 644–803 (TVQRMEVPVE…HRAKGLGMEN (160 aa)). The N-linked (GlcNAc...) asparagine glycan is linked to Asn735. The helical transmembrane segment at 804-824 (IGGIFVVLICGLIIAVFVAVM) threads the bilayer. Residues 825-979 (EFIWSTRRSA…TGPRELTEHE (155 aa)) are Cytoplasmic-facing. Residues 856-867 (RKTSRSRRRRRP) show a composition bias toward basic residues. Disordered stretches follow at residues 856–875 (RKTS…RALL), 890–925 (LYSA…APTP), and 942–979 (RASG…TEHE). Positions 894-903 (GAGGDAGAHG) are enriched in gly residues. Over residues 912-923 (PGPPGGPRPQAP) the composition is skewed to pro residues.

The protein belongs to the glutamate-gated ion channel (TC 1.A.10.1) family. GRIK5 subfamily. In terms of assembly, homotetramer. Heterotetramer with GRIK2. Can form functional heteromeric receptors with GRIK1, GRIK2 and GRIK3. Forms a heteromeric complex with GRIK2. Expressed in the hippocampal mossy fiber synapses (at protein level).

Its subcellular location is the cell membrane. The protein resides in the postsynaptic cell membrane. It is found in the presynaptic cell membrane. Ionotropic glutamate receptor that functions as a cation-permeable ligand-gated ion channel, gated by L-glutamate and the glutamatergic agonist kainic acid. Cannot form functional channels on its own and produces channel activity only in heteromeric assembly with GRIK2 subunit. Can form functional heteromeric receptors with GRIK1 and GRIK3. This Mus musculus (Mouse) protein is Glutamate receptor ionotropic, kainate 5 (Grik5).